The sequence spans 284 residues: Tropomyosin alpha-1 chain (284 aa).

Position 1 is an N-acetylmethionine (Met-1). The interval 1–38 (MDAIKKKMQMLKLDKENALDRAEQAEADKKAAEDRSKQ) is disordered. The stretch at 1 to 284 (MDAIKKKMQM…DHALNDMTSI (284 aa)) forms a coiled coil. Basic and acidic residues predominate over residues 12 to 38 (KLDKENALDRAEQAEADKKAAEDRSKQ). Residue Ser-45 is modified to Phosphoserine. The interval 116–136 (AEKAADESERGMKVIESRAQK) is disordered. Phosphoserine is present on residues Ser-174, Ser-186, Ser-206, and Ser-252. Tyr-261 is subject to Phosphotyrosine. Residues Ser-271 and Ser-283 each carry the phosphoserine modification.

This sequence belongs to the tropomyosin family. Homodimer. Heterodimer of an alpha (TPM1, TPM3 or TPM4) and a beta (TPM2) chain. Interacts with HRG (via the HRR domain); the interaction contributes to the antiangiogenic properties of the histidine/proline-rich region (HRR) of HRG. Interacts (via N-terminus) with LMOD2 (via N-terminus) and TMOD1 (via N-terminus). Post-translationally, phosphorylated at Ser-283 by DAPK1 in response to oxidative stress and this phosphorylation enhances stress fiber formation in endothelial cells.

The protein localises to the cytoplasm. It is found in the cytoskeleton. Its function is as follows. Binds to actin filaments in muscle and non-muscle cells. Plays a central role, in association with the troponin complex, in the calcium dependent regulation of vertebrate striated muscle contraction. Smooth muscle contraction is regulated by interaction with caldesmon. In non-muscle cells is implicated in stabilizing cytoskeleton actin filaments. The sequence is that of Tropomyosin alpha-1 chain (Tpm1) from Mus musculus (Mouse).